Here is a 339-residue protein sequence, read N- to C-terminus: Phenylalanine--tRNA ligase alpha subunit (339 aa).

Mg(2+) is bound at residue Glu254.

The protein belongs to the class-II aminoacyl-tRNA synthetase family. Phe-tRNA synthetase alpha subunit type 1 subfamily. In terms of assembly, tetramer of two alpha and two beta subunits. The cofactor is Mg(2+).

It is found in the cytoplasm. The enzyme catalyses tRNA(Phe) + L-phenylalanine + ATP = L-phenylalanyl-tRNA(Phe) + AMP + diphosphate + H(+). This is Phenylalanine--tRNA ligase alpha subunit from Caldanaerobacter subterraneus subsp. tengcongensis (strain DSM 15242 / JCM 11007 / NBRC 100824 / MB4) (Thermoanaerobacter tengcongensis).